The chain runs to 342 residues: MEIPVEFLLEKTIIVTAVFTISLVIAMYSTYAERKVSALLQDRIGPNRAGPFGLLQPLADGVKFFMKEEIIPSSANKALFILGPSIAMMTACLTGAVIPWGSYLEIGGDQIALQVTDINIGVLYIFAVVSIGVYGVMIGGWASNNKFSLMGAIRASSQMISYEIAMGLSIIALVMTTGTLSIGEIVQQQTTDWWNIVYQPLGFFIFMVCSFAECNRTPFDLPECEAELIGGYHTEYSSMKLGLYLFAEYINMFISSAVMSAFYFGGYDIPYIETLGLDQNTVTILGTLFFFTKIVLFIFLFMWVRWTLPRFRYDQLMNLGWKIMIPMAIINIIITGACILLF.

A run of 8 helical transmembrane segments spans residues 7 to 27 (FLLE…VIAM), 78 to 98 (ALFI…GAVI), 120 to 140 (IGVL…MIGG), 166 to 186 (MGLS…GEIV), 193 to 213 (WWNI…SFAE), 245 to 265 (LFAE…FYFG), 284 to 304 (ILGT…FMWV), and 322 to 342 (KIMI…ILLF).

This sequence belongs to the complex I subunit 1 family. In terms of assembly, NDH-1 is composed of 14 different subunits. Subunits NuoA, H, J, K, L, M, N constitute the membrane sector of the complex.

The protein resides in the cell inner membrane. The catalysed reaction is a quinone + NADH + 5 H(+)(in) = a quinol + NAD(+) + 4 H(+)(out). In terms of biological role, NDH-1 shuttles electrons from NADH, via FMN and iron-sulfur (Fe-S) centers, to quinones in the respiratory chain. The immediate electron acceptor for the enzyme in this species is believed to be ubiquinone. Couples the redox reaction to proton translocation (for every two electrons transferred, four hydrogen ions are translocated across the cytoplasmic membrane), and thus conserves the redox energy in a proton gradient. This subunit may bind ubiquinone. The protein is NADH-quinone oxidoreductase subunit H 1 of Cytophaga hutchinsonii (strain ATCC 33406 / DSM 1761 / CIP 103989 / NBRC 15051 / NCIMB 9469 / D465).